The primary structure comprises 126 residues: Small ribosomal subunit protein uS13 (126 aa).

Residues 95 to 126 (GLPVRGQQTRTNARTRKGKRKTVGGTKKAKAK) are disordered. Basic residues predominate over residues 107 to 126 (ARTRKGKRKTVGGTKKAKAK).

This sequence belongs to the universal ribosomal protein uS13 family. As to quaternary structure, part of the 30S ribosomal subunit. Forms a loose heterodimer with protein S19. Forms two bridges to the 50S subunit in the 70S ribosome.

Functionally, located at the top of the head of the 30S subunit, it contacts several helices of the 16S rRNA. In the 70S ribosome it contacts the 23S rRNA (bridge B1a) and protein L5 of the 50S subunit (bridge B1b), connecting the 2 subunits; these bridges are implicated in subunit movement. Contacts the tRNAs in the A and P-sites. The polypeptide is Small ribosomal subunit protein uS13 (Aquifex aeolicus (strain VF5)).